A 129-amino-acid chain; its full sequence is MKEVIDTVGRRKTSVARVFMSPGKGKIVVNKLPVEEYFKDEFKRSQALKPLVTAEKQDEFDIKVNVKGGGLTGQSGAVCLAIARALVEFDESIRPTLRTERLLTRDPRMVERKKYGKKKARKSFQFSKR.

Positions 110 to 129 (VERKKYGKKKARKSFQFSKR) are disordered. Positions 114–129 (KYGKKKARKSFQFSKR) are enriched in basic residues.

Belongs to the universal ribosomal protein uS9 family.

This Chlorobaculum parvum (strain DSM 263 / NCIMB 8327) (Chlorobium vibrioforme subsp. thiosulfatophilum) protein is Small ribosomal subunit protein uS9.